A 38-amino-acid polypeptide reads, in one-letter code: Photosystem II reaction center protein L (38 aa).

A helical membrane pass occupies residues Ser17–Phe37.

Belongs to the PsbL family. In terms of assembly, PSII is composed of 1 copy each of membrane proteins PsbA, PsbB, PsbC, PsbD, PsbE, PsbF, PsbH, PsbI, PsbJ, PsbK, PsbL, PsbM, PsbT, PsbX, PsbY, PsbZ, Psb30/Ycf12, at least 3 peripheral proteins of the oxygen-evolving complex and a large number of cofactors. It forms dimeric complexes.

It localises to the plastid. The protein localises to the chloroplast thylakoid membrane. Functionally, one of the components of the core complex of photosystem II (PSII). PSII is a light-driven water:plastoquinone oxidoreductase that uses light energy to abstract electrons from H(2)O, generating O(2) and a proton gradient subsequently used for ATP formation. It consists of a core antenna complex that captures photons, and an electron transfer chain that converts photonic excitation into a charge separation. This subunit is found at the monomer-monomer interface and is required for correct PSII assembly and/or dimerization. The sequence is that of Photosystem II reaction center protein L from Aethionema cordifolium (Lebanon stonecress).